The following is a 181-amino-acid chain: Proteinase inhibitor B (181 aa).

The first 24 residues, 1 to 24, serve as a signal peptide directing secretion; it reads MAASNALLLISGALLISLAVLCQG. 3 cysteine pairs are disulfide-bonded: Cys-67–Cys-113, Cys-134–Cys-143, and Cys-136–Cys-139.

Belongs to the protease inhibitor I3 (leguminous Kunitz-type inhibitor) family.

It localises to the secreted. Possesses two reactive sites. Inhibits two molecules of trypsin simultaneously. Inhibits efficiently kallikrein, but chymotrypsin weakly. The polypeptide is Proteinase inhibitor B (Sagittaria sagittifolia (Arrowhead)).